The chain runs to 389 residues: Putative teichuronic acid biosynthesis glycosyltransferase TuaC (389 aa).

This sequence belongs to the glycosyltransferase group 1 family. Glycosyltransferase 4 subfamily.

Its pathway is cell wall biogenesis; teichuronic acid biosynthesis. The polypeptide is Putative teichuronic acid biosynthesis glycosyltransferase TuaC (tuaC) (Bacillus subtilis (strain 168)).